The primary structure comprises 432 residues: Bifunctional IPC transferase and DIPP synthase (432 aa).

The tract at residues 3 to 225 (PERAVILAAG…RARRMLVRTA (223 aa)) is mobA-like NTP transferase. CTP is bound by residues 9–11 (LAA), lysine 22, and glutamate 113. Glutamate 113 is a binding site for Mg(2+). The interval 226-426 (VKGTGDGFVS…LTLYFVVKKV (201 aa)) is CDP-alcohol phosphatidyltransferases. Transmembrane regions (helical) follow at residues 264-284 (FLLGIISALTTLVSLPLAGIL), 337-356 (IWYFVALLALLGSVMVSYST), and 385-405 (VFLTMLFLLYQIAASIKALFL).

In the N-terminal section; belongs to the MobA family. The protein in the C-terminal section; belongs to the CDP-alcohol phosphatidyltransferase class-I family. The cofactor is Mg(2+).

Its subcellular location is the membrane. It catalyses the reaction 1D-myo-inositol 3-phosphate + CTP + H(+) = CDP-1L-myo-inositol + diphosphate. The enzyme catalyses CDP-1L-myo-inositol + 1D-myo-inositol 3-phosphate = bis(1L-myo-inositol) 3,1'-phosphate 1-phosphate + CMP + H(+). Functionally, involved in biosynthesis of di-myo-inositol phosphate (DIP), a widespread organic solute in microorganisms adapted to hot environments. Catalyzes the condensation of CTP and L-myo-inositol-1-phosphate into CDP-L-myo-inositol, as well as the biosynthesis of di-myo-inositol-1,3'-phosphate-1'-phosphate (DIPP) from CDP-L-myo-inositol and L-myo-inositol-1-phosphate. This Thermococcus kodakarensis (strain ATCC BAA-918 / JCM 12380 / KOD1) (Pyrococcus kodakaraensis (strain KOD1)) protein is Bifunctional IPC transferase and DIPP synthase.